A 179-amino-acid polypeptide reads, in one-letter code: Cytoglobin-2 (179 aa).

Residues methionine 1–glutamate 11 are compositionally biased toward acidic residues. Positions methionine 1–threonine 20 are disordered. In terms of domain architecture, Globin spans proline 18–threonine 167. Histidine 81 and histidine 113 together coordinate heme b.

Belongs to the globin family. Monomeric. In terms of tissue distribution, expressed in all tissues examined, with highest levels in brain and eye, and considerably lower levels in skin, gut, heart, gill, liver and muscle.

The protein localises to the cytoplasm. The protein resides in the nucleus. It carries out the reaction Fe(II)-heme b-[protein] + nitric oxide + O2 = Fe(III)-heme b-[protein] + nitrate. The catalysed reaction is Fe(III)-heme b-[protein] + nitric oxide + H2O = Fe(II)-heme b-[protein] + nitrite + 2 H(+). It catalyses the reaction 2 superoxide + 2 H(+) = H2O2 + O2. The enzyme catalyses H2O2 + AH2 = A + 2 H2O. Probable multifunctional globin with a hexacoordinated heme iron required for the catalysis of various reactions depending on redox condition of the cell as well as oxygen availability. Has a nitric oxide dioxygenase (NOD) activity and is most probably involved in cell-mediated and oxygen-dependent nitric oxide consumption. Under normoxic conditions functions as a nitric oxide dioxygenase (NOD) but under hypoxic conditions the globin may switch its function to that of a nitrite (NO2) reductase (NiR), generating nitric oxide. Could also have peroxidase and superoxide dismutase activities, detoxifying reactive oxygen species and protecting cells against oxidative stress. Also binds dioxygen with low affinity and could function as an oxygen sensor but has probably no function as a respiratory oxygen carrier. The sequence is that of Cytoglobin-2 from Danio rerio (Zebrafish).